The following is a 347-amino-acid chain: MSAVDKRAKFESALPVFVDEIVNYLKTINIPDDVTEWYKNSLFHNTLGGKYNRGLSVIDSYEILLGHPLDEAAYMKAAVLGWMVELLQSFFLIADDIMDASKTRRGQPCWYLMPGVGNIAINDAFMVESAIYFLLKKHFRQESCYVDLIELFHDVTFQTELGQQLDLLTAPEDSVDLSKFSLQKHSFIVIYKTAFYSFYLPVALAMHLAGVATPENLKCAQDILIILGKYFQVQDDYLDCYGDPTVTGKIGTDILDNKCSWIINLALAKCTPEQRVILDDNYGRKDSESEKRVKAVFEELNIRGEFENYEESEVSEIKKLIDGVDESTGLKKSIFTTFLGKIYKRNK.

The isopentenyl diphosphate site is built by Lys-50, Arg-53, and Gln-88. Asp-95 and Asp-99 together coordinate Mg(2+). Arg-104 contacts dimethylallyl diphosphate. Arg-105 serves as a coordination point for isopentenyl diphosphate. Dimethylallyl diphosphate is bound by residues Lys-192, Thr-193, Gln-232, Lys-249, and Lys-258.

Belongs to the FPP/GGPP synthase family. In terms of assembly, interacts with spo9. Mg(2+) is required as a cofactor.

It localises to the cytoplasm. It is found in the nucleus. It carries out the reaction isopentenyl diphosphate + dimethylallyl diphosphate = (2E)-geranyl diphosphate + diphosphate. It catalyses the reaction isopentenyl diphosphate + (2E)-geranyl diphosphate = (2E,6E)-farnesyl diphosphate + diphosphate. Its pathway is isoprenoid biosynthesis; farnesyl diphosphate biosynthesis; farnesyl diphosphate from geranyl diphosphate and isopentenyl diphosphate: step 1/1. It participates in isoprenoid biosynthesis; geranyl diphosphate biosynthesis; geranyl diphosphate from dimethylallyl diphosphate and isopentenyl diphosphate: step 1/1. Functionally, farnesyl pyrophosphate synthase; part of the second module of ergosterol biosynthesis pathway that includes the middle steps of the pathway. Fps1 catalyzes the sequential condensation of isopentenyl pyrophosphate with dimethylallyl pyrophosphate, and then with the resultant geranylpyrophosphate to the ultimate product farnesyl pyrophosphate. The second module is carried out in the vacuole and involves the formation of farnesyl diphosphate, which is also an important intermediate in the biosynthesis of ubiquinone, dolichol, heme and prenylated proteins. Activity by the mevalonate kinase erg12 first converts mevalonate into 5-phosphomevalonate. 5-phosphomevalonate is then further converted to 5-diphosphomevalonate by the phosphomevalonate kinase erg8. The diphosphomevalonate decarboxylase mvd1 then produces isopentenyl diphosphate. The isopentenyl-diphosphate delta-isomerase idi1 then catalyzes the 1,3-allylic rearrangement of the homoallylic substrate isopentenyl (IPP) to its highly electrophilic allylic isomer, dimethylallyl diphosphate (DMAPP). Finally the farnesyl diphosphate synthase fps1 catalyzes the sequential condensation of isopentenyl pyrophosphate with dimethylallyl pyrophosphate, and then with the resultant geranylpyrophosphate to the ultimate product farnesyl pyrophosphate. In Schizosaccharomyces pombe (strain 972 / ATCC 24843) (Fission yeast), this protein is Farnesyl pyrophosphate synthase.